A 716-amino-acid chain; its full sequence is Zinc finger CCCH domain-containing protein 30 (716 aa).

ANK repeat units lie at residues 90–120 (DYRT…DVNR) and 125–157 (DQTT…DLNL). Residues 201–231 (VTNVPNRSSSPCHSPTGENGGSGSGSPLGSP) are disordered. A compositionally biased stretch (polar residues) spans 203–213 (NVPNRSSSPCH). 2 consecutive C3H1-type zinc fingers follow at residues 306-328 (PCPD…HGVF) and 336-360 (QYRT…HTPE). Positions 521–562 (FQQQQQQQQSMLSPINTSFSSPKSVDHSLFSGGGRMSPRNVV) are disordered. Positions 530 to 543 (SMLSPINTSFSSPK) are enriched in polar residues. Position 566 is a phosphoserine (Ser566). The span at 583 to 594 (QQQQQQQQQQHQ) shows a compositional bias: low complexity. Disordered stretches follow at residues 583 to 638 (QQQQ…MSSE) and 667 to 692 (PAEA…PVEP). The segment covering 605–630 (TNSSPIVGSPVNNNTWSSKWGSSNGQ) has biased composition (polar residues).

In Arabidopsis thaliana (Mouse-ear cress), this protein is Zinc finger CCCH domain-containing protein 30.